The sequence spans 371 residues: Anhydro-N-acetylmuramic acid kinase (371 aa).

12–20 (GTVLDGNID) provides a ligand contact to ATP.

The protein belongs to the anhydro-N-acetylmuramic acid kinase family.

The catalysed reaction is 1,6-anhydro-N-acetyl-beta-muramate + ATP + H2O = N-acetyl-D-muramate 6-phosphate + ADP + H(+). Its pathway is amino-sugar metabolism; 1,6-anhydro-N-acetylmuramate degradation. It participates in cell wall biogenesis; peptidoglycan recycling. Functionally, catalyzes the specific phosphorylation of 1,6-anhydro-N-acetylmuramic acid (anhMurNAc) with the simultaneous cleavage of the 1,6-anhydro ring, generating MurNAc-6-P. Is required for the utilization of anhMurNAc either imported from the medium or derived from its own cell wall murein, and thus plays a role in cell wall recycling. This is Anhydro-N-acetylmuramic acid kinase from Mesorhizobium japonicum (strain LMG 29417 / CECT 9101 / MAFF 303099) (Mesorhizobium loti (strain MAFF 303099)).